Consider the following 245-residue polypeptide: Putative outer membrane protein RBE_0022 (245 aa).

The first 23 residues, 1 to 23 (MIRMSKRLGVILFVSCISINSFA), serve as a signal peptide directing secretion.

The protein belongs to the OmpW/AlkL family.

It localises to the cell outer membrane. This Rickettsia bellii (strain RML369-C) protein is Putative outer membrane protein RBE_0022.